The chain runs to 291 residues: G1/S-specific cyclin-D1 (291 aa).

Thr-282 carries the phosphothreonine modification.

It belongs to the cyclin family. Cyclin D subfamily. Interacts with the CDK4 and CDK6 protein kinases to form a serine/threonine kinase holoenzyme complex. The cyclin subunit imparts substrate specificity to the complex. Post-translationally, phosphorylation at Thr-282 by MAP kinases is required for ubiquitination and degradation by the DCX(AMBRA1) complex. Ubiquitinated by the DCX(AMBRA1) complex during the transition from G1 to S cell phase, leading to its degradation. The DCX(AMBRA1) complex represents the major regulator of CCND1 stability during the G1/S transition.

Its subcellular location is the nucleus. It is found in the cytoplasm. Functionally, regulatory component of the cyclin D1-CDK4 (DC) complex that phosphorylates and inhibits members of the retinoblastoma (RB) protein family including RB1 and regulates the cell-cycle during G(1)/S transition. Phosphorylation of RB1 allows dissociation of the transcription factor E2F from the RB/E2F complex and the subsequent transcription of E2F target genes which are responsible for the progression through the G(1) phase. Hypophosphorylates RB1 in early G(1) phase. Cyclin D-CDK4 complexes are major integrators of various mitogenenic and antimitogenic signals. The chain is G1/S-specific cyclin-D1 (ccnd1) from Danio rerio (Zebrafish).